The sequence spans 325 residues: Formimidoylglutamase (325 aa).

Mn(2+)-binding residues include H125, D155, H157, D159, C246, and D248.

Belongs to the arginase family. It depends on Mn(2+) as a cofactor.

It carries out the reaction N-formimidoyl-L-glutamate + H2O = formamide + L-glutamate. It participates in amino-acid degradation; L-histidine degradation into L-glutamate; L-glutamate from N-formimidoyl-L-glutamate (hydrolase route): step 1/1. Catalyzes the conversion of N-formimidoyl-L-glutamate to L-glutamate and formamide. This Ralstonia nicotianae (strain ATCC BAA-1114 / GMI1000) (Ralstonia solanacearum) protein is Formimidoylglutamase.